The sequence spans 887 residues: Leucine--tRNA ligase (887 aa).

The 'HIGH' region signature appears at 48-58; that stretch reads PYPSGKLHMGH. The short motif at 644–648 is the 'KMSKS' region element; sequence TMSKS. ATP is bound at residue Lys-647.

It belongs to the class-I aminoacyl-tRNA synthetase family.

It localises to the cytoplasm. The enzyme catalyses tRNA(Leu) + L-leucine + ATP = L-leucyl-tRNA(Leu) + AMP + diphosphate. The protein is Leucine--tRNA ligase of Leptothrix cholodnii (strain ATCC 51168 / LMG 8142 / SP-6) (Leptothrix discophora (strain SP-6)).